A 364-amino-acid chain; its full sequence is Appendage-associated protein (364 aa).

2 coiled-coil regions span residues 142–196 and 288–313; these read IIHE…AECR and RIAQAELAAAADALKRAADKLQALGK.

The protein resides in the secreted. In terms of biological role, associates with actin filament appendages that are formed in the inclusion appendages of the parasitophorous vacuole during infection of the host erythrocyte. This chain is Appendage-associated protein, found in Anaplasma marginale (strain Illinois).